The sequence spans 180 residues: Large ribosomal subunit protein uL5 (180 aa).

Belongs to the universal ribosomal protein uL5 family. Part of the 50S ribosomal subunit; part of the 5S rRNA/L5/L18/L25 subcomplex. Contacts the 5S rRNA and the P site tRNA. Forms a bridge to the 30S subunit in the 70S ribosome.

Its function is as follows. This is one of the proteins that bind and probably mediate the attachment of the 5S RNA into the large ribosomal subunit, where it forms part of the central protuberance. In the 70S ribosome it contacts protein S13 of the 30S subunit (bridge B1b), connecting the 2 subunits; this bridge is implicated in subunit movement. Contacts the P site tRNA; the 5S rRNA and some of its associated proteins might help stabilize positioning of ribosome-bound tRNAs. The chain is Large ribosomal subunit protein uL5 from Cupriavidus metallidurans (strain ATCC 43123 / DSM 2839 / NBRC 102507 / CH34) (Ralstonia metallidurans).